Here is a 201-residue protein sequence, read N- to C-terminus: Small ribosomal subunit protein uS5 (201 aa).

The disordered stretch occupies residues 1–27 (MAGPQRRGSGAGGGERRDRKGRDGGAA). The segment covering 14-23 (GERRDRKGRD) has biased composition (basic and acidic residues). Positions 34-97 (YVERVVAINR…EEAKKHFFKV (64 aa)) constitute an S5 DRBM domain.

This sequence belongs to the universal ribosomal protein uS5 family. In terms of assembly, part of the 30S ribosomal subunit. Contacts proteins S4 and S8.

Its function is as follows. With S4 and S12 plays an important role in translational accuracy. In terms of biological role, located at the back of the 30S subunit body where it stabilizes the conformation of the head with respect to the body. This chain is Small ribosomal subunit protein uS5, found in Streptomyces avermitilis (strain ATCC 31267 / DSM 46492 / JCM 5070 / NBRC 14893 / NCIMB 12804 / NRRL 8165 / MA-4680).